A 421-amino-acid polypeptide reads, in one-letter code: Ribosomal RNA large subunit methyltransferase G (421 aa).

The interval 389 to 421 (EPELEQESDLNSKLDANTEVPHPQSALYGKPKA) is disordered.

This sequence belongs to the methyltransferase superfamily. RlmG family.

The protein resides in the cytoplasm. The enzyme catalyses guanosine(1835) in 23S rRNA + S-adenosyl-L-methionine = N(2)-methylguanosine(1835) in 23S rRNA + S-adenosyl-L-homocysteine + H(+). Specifically methylates the guanine in position 1835 (m2G1835) of 23S rRNA. The protein is Ribosomal RNA large subunit methyltransferase G of Shewanella halifaxensis (strain HAW-EB4).